The sequence spans 289 residues: Glucanase inhibitor protein 2 (289 aa).

The signal sequence occupies residues 1-19; that stretch reads MKVTATIAAASMAIAAASA. A Peptidase S1 domain is found at 29–257; the sequence is ILGGSIIPSG…ALKWVNPIIK (229 aa). Cys-56 and Cys-72 are oxidised to a cystine. Residues Asn-89, Asn-104, and Asn-109 are each glycosylated (N-linked (GlcNAc...) asparagine). 2 cysteine pairs are disulfide-bonded: Cys-180-Cys-192 and Cys-202-Cys-233.

It belongs to the peptidase S1 family.

Its subcellular location is the secreted. In terms of biological role, secreted effector that suppresses host plant glucan elicitor-mediated defense responses. Targets host endoglucanases and inhibits the endoglucanase-mediated release of elicitor-active glucan oligosaccharides from P.sojae cell walls. The protein is Glucanase inhibitor protein 2 of Phytophthora sojae (Soybean stem and root rot agent).